Here is a 202-residue protein sequence, read N- to C-terminus: MTIPYPLGPPPAPRILVLGIGNILWADEGFGVRAVEAFHKAYELSDNVTILDGGTQGLYLVQFVNEHDRLIVFDAIDYGLEPGTMKVVEDDEVPKFTGAKKMSLHQTGFQEVLSAADFMGHYPERLTLIGCQPLDLEDWGGPLTAPVRGVIPAAIETAVRVLRSWGVAVTARPEGAAVPPLLEHDIDFERYERRAEPAALNC.

3 residues coordinate Ni(2+): Glu-28, Asp-74, and His-105.

The protein belongs to the peptidase A31 family.

In terms of biological role, not known. Could be involved in the processing of hydrogenase. This is Hydrogenase expression/formation protein HupD (hupD) from Rhizobium leguminosarum bv. viciae.